A 97-amino-acid polypeptide reads, in one-letter code: Ferredoxin-thioredoxin reductase, variable chain (97 aa).

It belongs to the ferredoxin thioredoxin reductase alpha subunit family. Heterodimer of subunit A (variable subunit) and subunit B (catalytic subunit). Heterodimeric FTR forms a complex with ferredoxin and thioredoxin.

Its subcellular location is the plastid. It localises to the chloroplast. In terms of biological role, variable subunit of the ferredoxin-thioredoxin reductase (FTR), which catalyzes the two-electron reduction of thioredoxins by the electrons provided by reduced ferredoxin. This Zea mays (Maize) protein is Ferredoxin-thioredoxin reductase, variable chain.